Here is a 981-residue protein sequence, read N- to C-terminus: Ubiquitin carboxyl-terminal hydrolase 15 (981 aa).

Alanine 2 is subject to N-acetylalanine. The tract at residues 2–223 (AEGGAADLDT…KNEDGTWPRG (222 aa)) is mediates interaction with SART3. The DUSP domain occupies 7 to 118 (ADLDTQRSDI…GQEPIARKVV (112 aa)). Residues 216-237 (EDGTWPRGPSTPKSPGASNFST) form a disordered region. Residue threonine 226 is modified to Phosphothreonine. Residues 226 to 237 (TPKSPGASNFST) are compositionally biased toward polar residues. Residues serine 229 and serine 242 each carry the phosphoserine modification. Residues 289–933 (CGLSNLGNTC…AAYVLFYQRQ (645 aa)) enclose the USP domain. The Nucleophile role is filled by cysteine 298. Threonine 602 carries the phosphothreonine modification. The segment at 629 to 694 (GSLHCCKDQN…GGDNDSENGL (66 aa)) is disordered. Over residues 656-673 (METDEPDDESSQDQELPS) the composition is skewed to acidic residues. Histidine 891 functions as the Proton acceptor in the catalytic mechanism. A disordered region spans residues 952 to 981 (SAATGIPLESDEDSNDNDNDIENENCMHTN). Acidic residues predominate over residues 960–974 (ESDEDSNDNDNDIEN). Phosphoserine is present on residues serine 961 and serine 965.

The protein belongs to the peptidase C19 family. In terms of assembly, a homodimer structure has been reported; however it is unclear whether the protein form a homodimer in vivo. Identified in a complex with the COP9 signalosome complex (CSN). Interacts with SMAD1, SMAD2 and SMAD3; the interaction is direct. Forms a complex with SMURF2 and SMAD7. Interacts with TGFBR1. Interacts with SART3; the interaction is direct. May interact with RNF20 and RNF40. May interact with PRKN. Interacts with INCA1. (Microbial infection) Interacts with human papillomavirus type 16 protein E6. In terms of processing, phosphorylated. Phosphorylation protects against ubiquitination and subsequent degradation by the proteasome. Post-translationally, ubiquitinated, leading to degradation by the proteasome. As to expression, expressed in skeletal muscle, kidney, heart, placenta, liver, thymus, lung, and ovary, with little or no expression in other tissues.

The protein localises to the cytoplasm. Its subcellular location is the nucleus. It is found in the mitochondrion. It carries out the reaction Thiol-dependent hydrolysis of ester, thioester, amide, peptide and isopeptide bonds formed by the C-terminal Gly of ubiquitin (a 76-residue protein attached to proteins as an intracellular targeting signal).. In terms of biological role, hydrolase that removes conjugated ubiquitin from target proteins and regulates various pathways such as the TGF-beta receptor signaling, NF-kappa-B and RNF41/NRDP1-PRKN pathways. Acts as a key regulator of TGF-beta receptor signaling pathway, but the precise mechanism is still unclear: according to a report, acts by promoting deubiquitination of monoubiquitinated R-SMADs (SMAD1, SMAD2 and/or SMAD3), thereby alleviating inhibition of R-SMADs and promoting activation of TGF-beta target genes. According to another reports, regulates the TGF-beta receptor signaling pathway by mediating deubiquitination and stabilization of TGFBR1, leading to an enhanced TGF-beta signal. Able to mediate deubiquitination of monoubiquitinated substrates, 'Lys-27'-, 'Lys-48'- and 'Lys-63'-linked polyubiquitin chains. May also regulate gene expression and/or DNA repair through the deubiquitination of histone H2B. Acts as an inhibitor of mitophagy by counteracting the action of parkin (PRKN): hydrolyzes cleavage of 'Lys-48'- and 'Lys-63'-linked polyubiquitin chains attached by parkin on target proteins such as MFN2, thereby reducing parkin's ability to drive mitophagy. Acts as an associated component of COP9 signalosome complex (CSN) and regulates different pathways via this association: regulates NF-kappa-B by mediating deubiquitination of NFKBIA and deubiquitinates substrates bound to VCP. Involved in endosome organization by mediating deubiquitination of SQSTM1: ubiquitinated SQSTM1 forms a molecular bridge that restrains cognate vesicles in the perinuclear region and its deubiquitination releases target vesicles for fast transport into the cell periphery. Acts as a negative regulator of antifungal immunity by mediating 'Lys-27'-linked deubiquitination of CARD9, thereby inactivating CARD9. (Microbial infection) Protects APC and human papillomavirus type 16 protein E6 against degradation via the ubiquitin proteasome pathway. The sequence is that of Ubiquitin carboxyl-terminal hydrolase 15 from Homo sapiens (Human).